A 420-amino-acid chain; its full sequence is Ketoreductase sphF (420 aa).

The interval Met1–Gly21 is disordered. The helical transmembrane segment at Trp29–Trp49 threads the bilayer. Positions Arg275–Asp298 are disordered.

The protein localises to the membrane. The catalysed reaction is 3-oxopresphingofungin + NADPH + 2 H(+) = presphingofungin + NADP(+). It participates in secondary metabolite biosynthesis. Functionally, ketoreductase; part of the gene cluster that mediates the biosynthesis of sphingofungins, bioactive molecules acting as sphingolipid inhibitors via inhibiting serine palmitoyl transferase (SPT). Within the pathway, sphF catalyzes the reduction of the C-3 ketone of 3-keto-presphingofungin to produce presphingofungin. Sphingofungin biosynthesis starts with the PKS sphB that produces an C18 polyketide precursor 3-hydroxyoctadeca-4,10-dienoyl-ACP containing one delta-6 desaturation and one delta-12 desaturation. The aminoacyl transferase sphA uses the sphB product to produce 3-keto-presphingofungin by adding an aminomalonate molecule. SphF then reduces the C-3 ketone of 3-keto-presphingofungin which leads to presphingofungin. The cytochrome P450 monooxygenase sphH converts presphingofungin into sphingofungin B1 which is further converted to sphingofungin B by the dioxygenase sphC. SphC is also able to convert presphingofungin into sphingofungin B2. The acetyltransferase sphE acetylates sphingofungin B to produce sphingofungin C, but can also convert sphingofungin B1 into sphingofungin C1 and sphingofungin B2 into sphingofungin C2. Finally, sphingofungin C can be spontaneously converted into sphingofungin D. The polypeptide is Ketoreductase sphF (Aspergillus fumigatus (strain CBS 144.89 / FGSC A1163 / CEA10) (Neosartorya fumigata)).